Consider the following 214-residue polypeptide: Sugar fermentation stimulation protein homolog (214 aa).

This sequence belongs to the SfsA family.

This chain is Sugar fermentation stimulation protein homolog, found in Aquifex aeolicus (strain VF5).